The following is a 273-amino-acid chain: Imidazole glycerol phosphate synthase subunit HisF (273 aa).

Catalysis depends on residues Asp-12 and Asp-136.

This sequence belongs to the HisA/HisF family. In terms of assembly, heterodimer of HisH and HisF.

It localises to the cytoplasm. The catalysed reaction is 5-[(5-phospho-1-deoxy-D-ribulos-1-ylimino)methylamino]-1-(5-phospho-beta-D-ribosyl)imidazole-4-carboxamide + L-glutamine = D-erythro-1-(imidazol-4-yl)glycerol 3-phosphate + 5-amino-1-(5-phospho-beta-D-ribosyl)imidazole-4-carboxamide + L-glutamate + H(+). It functions in the pathway amino-acid biosynthesis; L-histidine biosynthesis; L-histidine from 5-phospho-alpha-D-ribose 1-diphosphate: step 5/9. IGPS catalyzes the conversion of PRFAR and glutamine to IGP, AICAR and glutamate. The HisF subunit catalyzes the cyclization activity that produces IGP and AICAR from PRFAR using the ammonia provided by the HisH subunit. In Halobacterium salinarum (strain ATCC 29341 / DSM 671 / R1), this protein is Imidazole glycerol phosphate synthase subunit HisF.